Reading from the N-terminus, the 424-residue chain is UDP-N-acetylglucosamine 1-carboxyvinyltransferase (424 aa).

Phosphoenolpyruvate is bound at residue 22–23 (KN). Arg93 provides a ligand contact to UDP-N-acetyl-alpha-D-glucosamine. Cys117 (proton donor) is an active-site residue. The residue at position 117 (Cys117) is a 2-(S-cysteinyl)pyruvic acid O-phosphothioketal. Residues 122-126 (RPVDL), Asp307, and Ile329 contribute to the UDP-N-acetyl-alpha-D-glucosamine site.

The protein belongs to the EPSP synthase family. MurA subfamily.

It localises to the cytoplasm. It carries out the reaction phosphoenolpyruvate + UDP-N-acetyl-alpha-D-glucosamine = UDP-N-acetyl-3-O-(1-carboxyvinyl)-alpha-D-glucosamine + phosphate. It functions in the pathway cell wall biogenesis; peptidoglycan biosynthesis. Its function is as follows. Cell wall formation. Adds enolpyruvyl to UDP-N-acetylglucosamine. In Chlorobaculum parvum (strain DSM 263 / NCIMB 8327) (Chlorobium vibrioforme subsp. thiosulfatophilum), this protein is UDP-N-acetylglucosamine 1-carboxyvinyltransferase.